Consider the following 336-residue polypeptide: UDP-galactose transporter 1 (336 aa).

9 helical membrane passes run 11–31, 38–58, 83–103, 131–151, 154–174, 193–213, 227–247, 254–274, and 278–298; these read LAIL…KWIF, FPLS…YIVI, FVFC…PVSF, IWAS…TELS, MFGF…TILA, APFA…SGIL, IIIL…FYVI, TFNV…WLIF, and ISYM…FYGY.

The protein belongs to the TPT transporter family. TPT (TC 2.A.7.9) subfamily.

The protein localises to the membrane. Its function is as follows. Nucleotide sugar transporter that specifically transports UDP-galactose. The chain is UDP-galactose transporter 1 from Arabidopsis thaliana (Mouse-ear cress).